A 355-amino-acid chain; its full sequence is Heavy metal-associated isoprenylated plant protein 7 (355 aa).

Over residues 1 to 58 (MGEEEKKPEAAEEKKMEEKKPEEKKEGEDKKVDAEKKGEDSDKKPQEGESNKDSKEDS) the composition is skewed to basic and acidic residues. Residues 1–74 (MGEEEKKPEA…APAPPPPPQE (74 aa)) form a disordered region. Residues 63–73 (PEAPAPPPPPQ) show a composition bias toward pro residues. 2 HMA domains span residues 72-136 (PQEV…HRQV) and 170-234 (VVTV…KHAA). A metal cation is bound by residues Cys-83 and Cys-86. The segment at 132-157 (THRQVQLLSPIPPPPPPPEKKAEEDK) is disordered. Positions 181 and 184 each coordinate a metal cation. Positions 235–308 (IMKIDPPPPP…GGGEEEGKVV (74 aa)) are disordered. Residues 254–293 (EGEKKEEEKGEGESKGEEGKDDKAKTDEEKKEGDGGKGEG) are compositionally biased toward basic and acidic residues. Cys-352 is subject to Cysteine methyl ester. A lipid anchor (S-farnesyl cysteine) is attached at Cys-352. Residues 353 to 355 (TVM) constitute a propeptide, removed in mature form.

It belongs to the HIPP family. Post-translationally, efficiently farnesylated in vitro.

Functionally, heavy-metal-binding protein. Binds zinc, copper and nickel in a reversible manner. This is Heavy metal-associated isoprenylated plant protein 7 from Arabidopsis thaliana (Mouse-ear cress).